The sequence spans 312 residues: Very-long-chain 3-oxoacyl-CoA reductase (312 aa).

The chain crosses the membrane as a helical span at residues 4 to 24 (APPAAGFLYWVGASTIAYLAL). 50–79 (GEWAVVTGGTDGIGKAYAEELAKRGMKIVL) lines the NADP(+) pocket. A run of 2 helical transmembrane segments spans residues 182–202 (GVIL…LTIY) and 269–285 (TTGY…NSIM). Ser-189 is a substrate binding site. The active-site Proton acceptor is Tyr-202. Positions 308–312 (KRKKN) match the Di-lysine motif motif.

Belongs to the short-chain dehydrogenases/reductases (SDR) family. 17-beta-HSD 3 subfamily. As to expression, expressed in most tissues tested.

It localises to the endoplasmic reticulum membrane. It carries out the reaction a very-long-chain (3R)-3-hydroxyacyl-CoA + NADP(+) = a very-long-chain 3-oxoacyl-CoA + NADPH + H(+). The catalysed reaction is 17beta-estradiol + NAD(+) = estrone + NADH + H(+). It catalyses the reaction 17beta-estradiol + NADP(+) = estrone + NADPH + H(+). The enzyme catalyses 3-oxooctadecanoyl-CoA + NADPH + H(+) = (3R)-hydroxyoctadecanoyl-CoA + NADP(+). It carries out the reaction (7Z,10Z,13Z,16Z)-3-oxodocosatetraenoyl-CoA + NADPH + H(+) = (3R)-hydroxy-(7Z,10Z,13Z,16Z)-docosatetraenoyl-CoA + NADP(+). The catalysed reaction is 3-oxo-(7Z,10Z,13Z,16Z,19Z)-docosapentaenoyl-CoA + NADPH + H(+) = (3R)-hydroxy-(7Z,10Z,13Z,16Z,19Z)-docosapentaenoyl-CoA + NADP(+). It catalyses the reaction (8Z,11Z,14Z)-3-oxoeicosatrienoyl-CoA + NADPH + H(+) = (3R)-hydroxy-(8Z,11Z,14Z)-eicosatrienoyl-CoA + NADP(+). The protein operates within lipid metabolism; fatty acid biosynthesis. Its pathway is steroid biosynthesis; estrogen biosynthesis. Functionally, catalyzes the second of the four reactions of the long-chain fatty acids elongation cycle. This endoplasmic reticulum-bound enzymatic process, allows the addition of two carbons to the chain of long- and very long-chain fatty acids/VLCFAs per cycle. This enzyme has a 3-ketoacyl-CoA reductase activity, reducing 3-ketoacyl-CoA to 3-hydroxyacyl-CoA, within each cycle of fatty acid elongation. Thereby, it may participate in the production of VLCFAs of different chain lengths that are involved in multiple biological processes as precursors of membrane lipids and lipid mediators. May also catalyze the transformation of estrone (E1) into estradiol (E2) and play a role in estrogen formation. In Mus musculus (Mouse), this protein is Very-long-chain 3-oxoacyl-CoA reductase.